A 412-amino-acid chain; its full sequence is ORC1-type DNA replication protein 2 (412 aa).

Residues 61-65, Y207, and R219 each bind ATP; that span reads VGKTA.

Belongs to the CDC6/cdc18 family.

In terms of biological role, involved in regulation of DNA replication. The protein is ORC1-type DNA replication protein 2 (cdc6b) of Haloarcula marismortui (strain ATCC 43049 / DSM 3752 / JCM 8966 / VKM B-1809) (Halobacterium marismortui).